A 441-amino-acid polypeptide reads, in one-letter code: Ribosomal protein uS12 methylthiotransferase RimO (441 aa).

One can recognise an MTTase N-terminal domain in the interval 7–117 (PKISFVSLGC…VLDAVHRAKP (111 aa)). Residues Cys-16, Cys-52, Cys-81, Cys-148, Cys-152, and Cys-155 each contribute to the [4Fe-4S] cluster site. The 238-residue stretch at 134–371 (LTPRHYAYLK…MARQQAISAR (238 aa)) folds into the Radical SAM core domain. One can recognise a TRAM domain in the interval 374-440 (KRKVGTRQQI…AYDLHGTVAG (67 aa)).

This sequence belongs to the methylthiotransferase family. RimO subfamily. The cofactor is [4Fe-4S] cluster.

The protein localises to the cytoplasm. It carries out the reaction L-aspartate(89)-[ribosomal protein uS12]-hydrogen + (sulfur carrier)-SH + AH2 + 2 S-adenosyl-L-methionine = 3-methylsulfanyl-L-aspartate(89)-[ribosomal protein uS12]-hydrogen + (sulfur carrier)-H + 5'-deoxyadenosine + L-methionine + A + S-adenosyl-L-homocysteine + 2 H(+). Catalyzes the methylthiolation of an aspartic acid residue of ribosomal protein uS12. In Rhodopseudomonas palustris (strain HaA2), this protein is Ribosomal protein uS12 methylthiotransferase RimO.